A 271-amino-acid polypeptide reads, in one-letter code: Phosphatidylglycerol--prolipoprotein diacylglyceryl transferase (271 aa).

The next 7 membrane-spanning stretches (helical) occupy residues 10–30 (VALA…LVGI), 56–76 (LVFW…VLFY), 92–112 (WKGG…ALWF), 120–140 (FFQL…AGRI), 174–194 (PSQL…LWLF), 202–222 (MAVS…VEFV), and 237–257 (LTMG…LIWL). Arg-139 contacts a 1,2-diacyl-sn-glycero-3-phospho-(1'-sn-glycerol).

The protein belongs to the Lgt family.

The protein resides in the cell inner membrane. It carries out the reaction L-cysteinyl-[prolipoprotein] + a 1,2-diacyl-sn-glycero-3-phospho-(1'-sn-glycerol) = an S-1,2-diacyl-sn-glyceryl-L-cysteinyl-[prolipoprotein] + sn-glycerol 1-phosphate + H(+). It participates in protein modification; lipoprotein biosynthesis (diacylglyceryl transfer). Functionally, catalyzes the transfer of the diacylglyceryl group from phosphatidylglycerol to the sulfhydryl group of the N-terminal cysteine of a prolipoprotein, the first step in the formation of mature lipoproteins. This Pseudomonas fluorescens (strain Pf0-1) protein is Phosphatidylglycerol--prolipoprotein diacylglyceryl transferase.